We begin with the raw amino-acid sequence, 198 residues long: Putative 3-methyladenine DNA glycosylase (198 aa).

The protein belongs to the DNA glycosylase MPG family.

The sequence is that of Putative 3-methyladenine DNA glycosylase from Oceanobacillus iheyensis (strain DSM 14371 / CIP 107618 / JCM 11309 / KCTC 3954 / HTE831).